A 697-amino-acid polypeptide reads, in one-letter code: Elongation factor G (697 aa).

The region spanning 8 to 282 is the tr-type G domain; that stretch reads EDYRNIGIMA…AIVDYLPSPL (275 aa). GTP-binding positions include 17-24, 81-85, and 135-138; these read AHIDAGKT, DTPGH, and NKMD.

This sequence belongs to the TRAFAC class translation factor GTPase superfamily. Classic translation factor GTPase family. EF-G/EF-2 subfamily.

The protein localises to the cytoplasm. Its function is as follows. Catalyzes the GTP-dependent ribosomal translocation step during translation elongation. During this step, the ribosome changes from the pre-translocational (PRE) to the post-translocational (POST) state as the newly formed A-site-bound peptidyl-tRNA and P-site-bound deacylated tRNA move to the P and E sites, respectively. Catalyzes the coordinated movement of the two tRNA molecules, the mRNA and conformational changes in the ribosome. In Metamycoplasma arthritidis (strain 158L3-1) (Mycoplasma arthritidis), this protein is Elongation factor G.